A 652-amino-acid polypeptide reads, in one-letter code: DNA ligase (652 aa).

Residues 29–33 (DSDYD), 78–79 (SL), and E107 each bind NAD(+). The N6-AMP-lysine intermediate role is filled by K109. R130, E164, K278, and K302 together coordinate NAD(+). Positions 395, 398, 413, and 418 each coordinate Zn(2+). One can recognise a BRCT domain in the interval 577–652 (NSDAALFGLT…IEDEDWLRQL (76 aa)).

The protein belongs to the NAD-dependent DNA ligase family. LigA subfamily. It depends on Mg(2+) as a cofactor. Requires Mn(2+) as cofactor.

It carries out the reaction NAD(+) + (deoxyribonucleotide)n-3'-hydroxyl + 5'-phospho-(deoxyribonucleotide)m = (deoxyribonucleotide)n+m + AMP + beta-nicotinamide D-nucleotide.. Its function is as follows. DNA ligase that catalyzes the formation of phosphodiester linkages between 5'-phosphoryl and 3'-hydroxyl groups in double-stranded DNA using NAD as a coenzyme and as the energy source for the reaction. It is essential for DNA replication and repair of damaged DNA. The chain is DNA ligase from Streptococcus pyogenes serotype M12 (strain MGAS2096).